Consider the following 271-residue polypeptide: Gap junction beta-5 protein (271 aa).

Over 1-20 (MNWSVFEGLLSGVNKYSTAF) the chain is Cytoplasmic. Residues 21–40 (GRIWLSLVFVFRVLVYLVTA) form a helical membrane-spanning segment. Residues 41 to 75 (ERVWGDDQKDFDCNTRQPGCTNVCYDEFFPVSHVR) are Extracellular-facing. A helical membrane pass occupies residues 76-98 (LWALQLILVTCPSLLVVMHVAYR). The Cytoplasmic portion of the chain corresponds to 99 to 124 (KAREKKYQQEVGKGYLYPNPGKKRGG). Residues 125 to 147 (LWWTYVCSLLFKATIDIIFLYLF) traverse the membrane as a helical segment. Over 148–182 (HAFYPRYTLPSMVKCHSAPCPNTVDCFIAKPSEKN) the chain is Extracellular. A helical membrane pass occupies residues 183–205 (IFIVFMLVTAIVCILLNLVELLY). Over 206 to 271 (LVIKRCSECA…PRAHVKKTIL (66 aa)) the chain is Cytoplasmic. The segment at 217–237 (AKRPPTAHAKNDPNWANPSSK) is disordered.

This sequence belongs to the connexin family. Beta-type (group I) subfamily. In terms of assembly, a connexon is composed of a hexamer of connexins. As to expression, expressed in skin.

It is found in the cell membrane. Its subcellular location is the cell junction. It localises to the gap junction. Functionally, one gap junction consists of a cluster of closely packed pairs of transmembrane channels, the connexons, through which materials of low MW diffuse from one cell to a neighboring cell. This is Gap junction beta-5 protein (Gjb5) from Rattus norvegicus (Rat).